The following is a 251-amino-acid chain: GTP cyclohydrolase 1 type 2 homolog (251 aa).

A divalent metal cation-binding residues include histidine 64, histidine 65, aspartate 102, histidine 219, and glutamate 223.

This sequence belongs to the GTP cyclohydrolase I type 2/NIF3 family. Homohexamer.

The chain is GTP cyclohydrolase 1 type 2 homolog from Chlamydia trachomatis serovar D (strain ATCC VR-885 / DSM 19411 / UW-3/Cx).